The sequence spans 351 residues: Dihydroorotate dehydrogenase (quinone) (351 aa).

FMN is bound by residues 65-69 (AGLDK) and T89. K69 contacts substrate. Substrate is bound at residue 114-118 (NRLGF). FMN-binding residues include N150 and N183. N183 contributes to the substrate binding site. The active-site Nucleophile is S186. N188 contributes to the substrate binding site. Positions 228 and 256 each coordinate FMN. 257-258 (NT) serves as a coordination point for substrate. Residues G279, G308, and 329-330 (YT) each bind FMN.

The protein belongs to the dihydroorotate dehydrogenase family. Type 2 subfamily. As to quaternary structure, monomer. FMN serves as cofactor.

Its subcellular location is the cell membrane. The enzyme catalyses (S)-dihydroorotate + a quinone = orotate + a quinol. It participates in pyrimidine metabolism; UMP biosynthesis via de novo pathway; orotate from (S)-dihydroorotate (quinone route): step 1/1. Functionally, catalyzes the conversion of dihydroorotate to orotate with quinone as electron acceptor. The sequence is that of Dihydroorotate dehydrogenase (quinone) from Acidovorax ebreus (strain TPSY) (Diaphorobacter sp. (strain TPSY)).